Consider the following 405-residue polypeptide: 8-amino-7-oxononanoate synthase 1 (405 aa).

R29 is a substrate binding site. Position 116–117 (G116–Y117) interacts with pyridoxal 5'-phosphate. H141 contacts substrate. 3 residues coordinate pyridoxal 5'-phosphate: S187, H215, and T247. An N6-(pyridoxal phosphate)lysine modification is found at K250. T368 contacts substrate.

It belongs to the class-II pyridoxal-phosphate-dependent aminotransferase family. BioF subfamily. Homodimer. The cofactor is pyridoxal 5'-phosphate.

The enzyme catalyses 6-carboxyhexanoyl-[ACP] + L-alanine + H(+) = (8S)-8-amino-7-oxononanoate + holo-[ACP] + CO2. It participates in cofactor biosynthesis; biotin biosynthesis. Catalyzes the decarboxylative condensation of pimeloyl-[acyl-carrier protein] and L-alanine to produce 8-amino-7-oxononanoate (AON), [acyl-carrier protein], and carbon dioxide. The protein is 8-amino-7-oxononanoate synthase 1 of Polaromonas sp. (strain JS666 / ATCC BAA-500).